The sequence spans 190 residues: MEKVPGEMEIERRERSEELSEAERKAVQAMWARLYANCEDVGVAILVRFFVNFPSAKQYFSQFKHMEDPLEMERSPQLRKHACRVMGALNTVVENLHDPDKVSSVLALVGKAHALKHKVEPVYFKILSGVILEVVAEEFASDFPPETQRAWAKLRGLIYSHVTAAYKEVGWVQQVPNATTPPATLPSSGP.

Residues 18–167 (ELSEAERKAV…IYSHVTAAYK (150 aa)) form the Globin domain. A disulfide bridge links Cys-38 with Cys-83. The heme b site is built by His-81 and His-113.

It belongs to the globin family. Monomeric. Homodimer; disulfide-linked in vitro. Also homooligomeric in vitro. The formation of an intramolecular disulfide bond between cysteines Cys-38 and Cys-83 specifically enhances the nitrite reductase activity. As to expression, widely expressed. Highest expression in heart, stomach, bladder and small intestine.

The protein resides in the cytoplasm. Its subcellular location is the nucleus. The enzyme catalyses Fe(II)-heme b-[protein] + nitric oxide + O2 = Fe(III)-heme b-[protein] + nitrate. It catalyses the reaction Fe(III)-heme b-[protein] + nitric oxide + H2O = Fe(II)-heme b-[protein] + nitrite + 2 H(+). It carries out the reaction 2 superoxide + 2 H(+) = H2O2 + O2. The catalysed reaction is H2O2 + AH2 = A + 2 H2O. The nitric oxide dioxygenase activity is activated by a reducing system composed of cytochrome b5, its upstream reductase CYB5R3 and NADH. Its function is as follows. Probable multifunctional globin with a hexacoordinated heme iron required for the catalysis of various reactions depending on redox condition of the cell as well as oxygen availability. Has a nitric oxide dioxygenase (NOD) activity and is most probably involved in cell-mediated and oxygen-dependent nitric oxide consumption. By scavenging this second messenger may regulate several biological processes including endothelium-mediated vasodilation and vascular tone. Under normoxic conditions functions as a nitric oxide dioxygenase (NOD) but under hypoxic conditions the globin may switch its function to that of a nitrite (NO2) reductase (NiR), generating nitric oxide. Could also have peroxidase and superoxide dismutase activities, detoxifying reactive oxygen species and protecting cells against oxidative stress. Also binds dioxygen with low affinity and could function as an oxygen sensor but has probably no function as a respiratory oxygen carrier. In Homo sapiens (Human), this protein is Cytoglobin.